A 244-amino-acid polypeptide reads, in one-letter code: CTD nuclear envelope phosphatase 1 (244 aa).

The helical transmembrane segment at Leu7–Arg29 threads the bilayer. The FCP1 homology domain maps to Ala57–Leu224.

It belongs to the dullard family. Interacts with CNEP1R1; the complex dephosphorylates LPIN1 and LPIN2. Muscle specific with lower expression in other metabolic tissues.

It localises to the endoplasmic reticulum membrane. Its subcellular location is the nucleus membrane. The catalysed reaction is O-phospho-L-seryl-[protein] + H2O = L-seryl-[protein] + phosphate. It catalyses the reaction O-phospho-L-threonyl-[protein] + H2O = L-threonyl-[protein] + phosphate. Serine/threonine protein phosphatase forming with CNEP1R1 an active phosphatase complex that dephosphorylates and may activate LPIN1 and LPIN2. LPIN1 and LPIN2 are phosphatidate phosphatases that catalyze the conversion of phosphatidic acid to diacylglycerol and control the metabolism of fatty acids at different levels. May indirectly modulate the lipid composition of nuclear and/or endoplasmic reticulum membranes and be required for proper nuclear membrane morphology and/or dynamics. May also indirectly regulate the production of lipid droplets and triacylglycerol. May antagonize BMP signaling. The polypeptide is CTD nuclear envelope phosphatase 1 (Ctdnep1) (Mus musculus (Mouse)).